A 367-amino-acid chain; its full sequence is tRNA-specific 2-thiouridylase MnmA (367 aa).

ATP-binding positions include 12-19 and M38; that span reads GMSGGVDS. The segment at 98 to 100 is interaction with target base in tRNA; the sequence is NPD. The active-site Nucleophile is C103. Residues C103 and C200 are joined by a disulfide bond. G128 provides a ligand contact to ATP. The segment at 150 to 152 is interaction with tRNA; it reads KDQ. Residue C200 is the Cysteine persulfide intermediate of the active site. An interaction with tRNA region spans residues 312–313; the sequence is RY.

Belongs to the MnmA/TRMU family. As to quaternary structure, interacts with TusE.

It is found in the cytoplasm. It catalyses the reaction S-sulfanyl-L-cysteinyl-[protein] + uridine(34) in tRNA + AH2 + ATP = 2-thiouridine(34) in tRNA + L-cysteinyl-[protein] + A + AMP + diphosphate + H(+). In terms of biological role, catalyzes the 2-thiolation of uridine at the wobble position (U34) of tRNA(Lys), tRNA(Glu) and tRNA(Gln), leading to the formation of s(2)U34, the first step of tRNA-mnm(5)s(2)U34 synthesis. Sulfur is provided by IscS, via a sulfur-relay system. Binds ATP and its substrate tRNAs. The protein is tRNA-specific 2-thiouridylase MnmA of Serratia proteamaculans (strain 568).